The chain runs to 233 residues: 2-C-methyl-D-erythritol 4-phosphate cytidylyltransferase (233 aa).

It belongs to the IspD/TarI cytidylyltransferase family. IspD subfamily.

It carries out the reaction 2-C-methyl-D-erythritol 4-phosphate + CTP + H(+) = 4-CDP-2-C-methyl-D-erythritol + diphosphate. The protein operates within isoprenoid biosynthesis; isopentenyl diphosphate biosynthesis via DXP pathway; isopentenyl diphosphate from 1-deoxy-D-xylulose 5-phosphate: step 2/6. In terms of biological role, catalyzes the formation of 4-diphosphocytidyl-2-C-methyl-D-erythritol from CTP and 2-C-methyl-D-erythritol 4-phosphate (MEP). This is 2-C-methyl-D-erythritol 4-phosphate cytidylyltransferase from Syntrophotalea carbinolica (strain DSM 2380 / NBRC 103641 / GraBd1) (Pelobacter carbinolicus).